The chain runs to 370 residues: Tyrosine-protein kinase transforming protein SEA (370 aa).

One can recognise a Protein kinase domain in the interval 60 to 323 (THRSRVIGRG…GLVCELERVL (264 aa)). Residues 66 to 74 (IGRGHFGSV) and Lys-92 each bind ATP. Asp-186 serves as the catalytic Proton acceptor. At Tyr-216 the chain carries Phosphotyrosine; by autocatalysis. The disordered stretch occupies residues 345–370 (PPFPPAPRGQLPDSEDEEDEEEEVAE). Residues 357–370 (DSEDEEDEEEEVAE) show a composition bias toward acidic residues.

Belongs to the protein kinase superfamily. Tyr protein kinase family.

It catalyses the reaction L-tyrosyl-[protein] + ATP = O-phospho-L-tyrosyl-[protein] + ADP + H(+). This is Tyrosine-protein kinase transforming protein SEA (V-SEA) from Galliformes.